Consider the following 608-residue polypeptide: Glutamine--fructose-6-phosphate aminotransferase [isomerizing] (608 aa).

Cys2 serves as the catalytic Nucleophile; for GATase activity. In terms of domain architecture, Glutamine amidotransferase type-2 spans 2-217 (CGIVGYIGDK…DHEIAIIKKD (216 aa)). SIS domains follow at residues 285–424 (TKED…KKGT) and 453–598 (VIQK…VDKP). Lys603 (for Fru-6P isomerization activity) is an active-site residue.

In terms of assembly, homodimer.

It localises to the cytoplasm. It carries out the reaction D-fructose 6-phosphate + L-glutamine = D-glucosamine 6-phosphate + L-glutamate. Catalyzes the first step in hexosamine metabolism, converting fructose-6P into glucosamine-6P using glutamine as a nitrogen source. The polypeptide is Glutamine--fructose-6-phosphate aminotransferase [isomerizing] (Caldanaerobacter subterraneus subsp. tengcongensis (strain DSM 15242 / JCM 11007 / NBRC 100824 / MB4) (Thermoanaerobacter tengcongensis)).